A 380-amino-acid chain; its full sequence is Erythronate-4-phosphate dehydrogenase (380 aa).

Serine 45 and threonine 66 together coordinate substrate. NAD(+)-binding residues include aspartate 146 and threonine 174. The active site involves arginine 207. Aspartate 231 is an NAD(+) binding site. Residue glutamate 236 is part of the active site. The active-site Proton donor is histidine 253. NAD(+) is bound at residue glycine 256. A substrate-binding site is contributed by tyrosine 257.

It belongs to the D-isomer specific 2-hydroxyacid dehydrogenase family. PdxB subfamily. As to quaternary structure, homodimer.

Its subcellular location is the cytoplasm. The enzyme catalyses 4-phospho-D-erythronate + NAD(+) = (R)-3-hydroxy-2-oxo-4-phosphooxybutanoate + NADH + H(+). Its pathway is cofactor biosynthesis; pyridoxine 5'-phosphate biosynthesis; pyridoxine 5'-phosphate from D-erythrose 4-phosphate: step 2/5. Its function is as follows. Catalyzes the oxidation of erythronate-4-phosphate to 3-hydroxy-2-oxo-4-phosphonooxybutanoate. The chain is Erythronate-4-phosphate dehydrogenase from Pseudomonas fluorescens (strain ATCC BAA-477 / NRRL B-23932 / Pf-5).